Here is a 649-residue protein sequence, read N- to C-terminus: Protein WHI4 (649 aa).

2 positions are modified to phosphoserine: Ser22 and Ser206. 2 disordered regions span residues 196–217 (EHVS…SSAQ) and 228–247 (ISYG…KPRP). Polar residues predominate over residues 228-238 (ISYGKTSSSPL). Residues Ser258 and Ser283 each carry the phosphoserine modification. Disordered regions lie at residues 438–461 (LDLN…SIFN) and 604–649 (QLPH…YGKS). In terms of domain architecture, RRM spans 533–625 (NTLYVGNLPP…GGIRLSFSKN (93 aa)). Residues 631–649 (GSNSRSKSGYSFNGSYGKS) are compositionally biased toward polar residues.

Post-translationally, phosphorylated by PKA in vitro.

The protein localises to the cytoplasm. Functionally, has a partially redundant function to WHI3, a dosage-dependent modulator of cell size. This Saccharomyces cerevisiae (strain ATCC 204508 / S288c) (Baker's yeast) protein is Protein WHI4 (WHI4).